We begin with the raw amino-acid sequence, 487 residues long: Argininosuccinate lyase (487 aa).

The protein belongs to the lyase 1 family. Argininosuccinate lyase subfamily.

The protein resides in the cytoplasm. It carries out the reaction 2-(N(omega)-L-arginino)succinate = fumarate + L-arginine. It participates in amino-acid biosynthesis; L-arginine biosynthesis; L-arginine from L-ornithine and carbamoyl phosphate: step 3/3. This chain is Argininosuccinate lyase, found in Methanococcus aeolicus (strain ATCC BAA-1280 / DSM 17508 / OCM 812 / Nankai-3).